The following is a 290-amino-acid chain: MSNSYLAFPKFDPVIFSIGPVSLHWYGLMYLVGFVFAMWLAVRRANKPGSGWTKEEVENLLYAGFLGVFVGGRVGYVLFYNLPLFLDNPLYLFKVWDGGMSFHGGLIGVICVMLWFARRTKRHFFQVADFIAPLIPFGLGAGRLGNFINGELWGRVTTDTPWAMLFPTSRGEDIAIVAADPAKWQAIFNQYGVLPRHPSQLYEMILEGVVLFIILNLFIRKPRPMGSVSGLFLIGYGAFRIIVECFRQPDAQLGLFDGVISMGQILSVPMILAGIIMMIWAYRRPAQQLS.

7 helical membrane-spanning segments follow: residues Val-21 to Ala-41, Leu-60 to Tyr-80, Trp-96 to Phe-116, Phe-124 to Leu-144, Ser-199 to Ile-219, Gly-226 to Phe-246, and Val-259 to Ile-279. Arg-143 is a binding site for a 1,2-diacyl-sn-glycero-3-phospho-(1'-sn-glycerol).

It belongs to the Lgt family.

The protein resides in the cell inner membrane. It catalyses the reaction L-cysteinyl-[prolipoprotein] + a 1,2-diacyl-sn-glycero-3-phospho-(1'-sn-glycerol) = an S-1,2-diacyl-sn-glyceryl-L-cysteinyl-[prolipoprotein] + sn-glycerol 1-phosphate + H(+). The protein operates within protein modification; lipoprotein biosynthesis (diacylglyceryl transfer). Functionally, catalyzes the transfer of the diacylglyceryl group from phosphatidylglycerol to the sulfhydryl group of the N-terminal cysteine of a prolipoprotein, the first step in the formation of mature lipoproteins. This chain is Phosphatidylglycerol--prolipoprotein diacylglyceryl transferase, found in Yersinia enterocolitica serotype O:8 / biotype 1B (strain NCTC 13174 / 8081).